A 296-amino-acid chain; its full sequence is 4-hydroxy-tetrahydrodipicolinate synthase (296 aa).

Threonine 49 is a binding site for pyruvate. Tyrosine 137 (proton donor/acceptor) is an active-site residue. The active-site Schiff-base intermediate with substrate is the lysine 166. A pyruvate-binding site is contributed by isoleucine 208.

Belongs to the DapA family. As to quaternary structure, homotetramer; dimer of dimers.

Its subcellular location is the cytoplasm. It carries out the reaction L-aspartate 4-semialdehyde + pyruvate = (2S,4S)-4-hydroxy-2,3,4,5-tetrahydrodipicolinate + H2O + H(+). It functions in the pathway amino-acid biosynthesis; L-lysine biosynthesis via DAP pathway; (S)-tetrahydrodipicolinate from L-aspartate: step 3/4. Its function is as follows. Catalyzes the condensation of (S)-aspartate-beta-semialdehyde [(S)-ASA] and pyruvate to 4-hydroxy-tetrahydrodipicolinate (HTPA). In Chlorobium phaeobacteroides (strain DSM 266 / SMG 266 / 2430), this protein is 4-hydroxy-tetrahydrodipicolinate synthase.